Reading from the N-terminus, the 237-residue chain is Ribosomal RNA small subunit methyltransferase G (237 aa).

S-adenosyl-L-methionine is bound by residues G76, F81, 128–129 (VE), and R147.

The protein belongs to the methyltransferase superfamily. RNA methyltransferase RsmG family.

The protein localises to the cytoplasm. Its function is as follows. Specifically methylates the N7 position of a guanine in 16S rRNA. This is Ribosomal RNA small subunit methyltransferase G from Prochlorococcus marinus (strain AS9601).